The sequence spans 1107 residues: Probable chromatin-remodeling complex ATPase chain (1107 aa).

2 disordered regions span residues 1–124 (MAKP…KREK) and 177–217 (GNQS…GSGG). Acidic residues-rich tracts occupy residues 8 to 25 (DEEE…EEQS), 33 to 43 (GEEEDEEEEEA), 53 to 65 (GGEE…EEIE), and 89 to 114 (EGDE…DEAE). Positions 121–147 (KREKARLKEMQKLKKQKIQEILDTQNA) form a coiled coil. A compositionally biased stretch (basic residues) spans 183 to 193 (KKPRGRGRHAS). The segment covering 197–211 (EEEEDEEYLKEEEDA) has biased composition (acidic residues). The region spanning 243–408 (IRLYENGING…WSLLNFLLPE (166 aa)) is the Helicase ATP-binding domain. 256 to 263 (DEMGLGKT) is an ATP binding site. The DEAH box motif lies at 359 to 362 (DEAH). In terms of domain architecture, Helicase C-terminal spans 536–687 (LLDKLLPKLK…ALVIQQGRLA (152 aa)). 2 SANT domains span residues 877–929 (EGFA…ERYK) and 978–1039 (QNKG…DTLI). Positions 1029-1067 (QELARRCDTLIRLVEKENQEYDEQERQARKDKRMAKNMT) form a coiled coil. Residues 1049–1107 (YDEQERQARKDKRMAKNMTPTKRSALRVSEGETTPSNSFKRRRQSLMDDYVGSGRRKRG) form a disordered region.

This sequence belongs to the SNF2/RAD54 helicase family. ISWI subfamily.

Its subcellular location is the nucleus. Its function is as follows. Possesses intrinsic ATP-dependent nucleosome-remodeling activity. Constitutes the catalytic subunit of several complexes capable of forming ordered nucleosome arrays on chromatin in vitro. The sequence is that of Probable chromatin-remodeling complex ATPase chain from Oryza sativa subsp. japonica (Rice).